We begin with the raw amino-acid sequence, 400 residues long: CCA-adding enzyme (400 aa).

The ATP site is built by glycine 28 and arginine 31. Positions 28 and 31 each coordinate CTP. The Mg(2+) site is built by aspartate 41 and aspartate 43. ATP is bound by residues arginine 112, aspartate 155, arginine 158, arginine 161, and arginine 164. Residues arginine 112, aspartate 155, arginine 158, arginine 161, and arginine 164 each contribute to the CTP site.

The protein belongs to the tRNA nucleotidyltransferase/poly(A) polymerase family. Bacterial CCA-adding enzyme type 3 subfamily. As to quaternary structure, homodimer. The cofactor is Mg(2+).

It catalyses the reaction a tRNA precursor + 2 CTP + ATP = a tRNA with a 3' CCA end + 3 diphosphate. The catalysed reaction is a tRNA with a 3' CCA end + 2 CTP + ATP = a tRNA with a 3' CCACCA end + 3 diphosphate. Functionally, catalyzes the addition and repair of the essential 3'-terminal CCA sequence in tRNAs without using a nucleic acid template. Adds these three nucleotides in the order of C, C, and A to the tRNA nucleotide-73, using CTP and ATP as substrates and producing inorganic pyrophosphate. tRNA 3'-terminal CCA addition is required both for tRNA processing and repair. Also involved in tRNA surveillance by mediating tandem CCA addition to generate a CCACCA at the 3' terminus of unstable tRNAs. While stable tRNAs receive only 3'-terminal CCA, unstable tRNAs are marked with CCACCA and rapidly degraded. The sequence is that of CCA-adding enzyme from Oceanobacillus iheyensis (strain DSM 14371 / CIP 107618 / JCM 11309 / KCTC 3954 / HTE831).